Here is a 227-residue protein sequence, read N- to C-terminus: NAD(P)H-quinone oxidoreductase subunit K, chloroplastic (227 aa).

Residues Cys43, Cys44, Cys108, and Cys139 each coordinate [4Fe-4S] cluster.

This sequence belongs to the complex I 20 kDa subunit family. NDH is composed of at least 16 different subunits, 5 of which are encoded in the nucleus. [4Fe-4S] cluster serves as cofactor.

It localises to the plastid. The protein localises to the chloroplast thylakoid membrane. The catalysed reaction is a plastoquinone + NADH + (n+1) H(+)(in) = a plastoquinol + NAD(+) + n H(+)(out). It catalyses the reaction a plastoquinone + NADPH + (n+1) H(+)(in) = a plastoquinol + NADP(+) + n H(+)(out). NDH shuttles electrons from NAD(P)H:plastoquinone, via FMN and iron-sulfur (Fe-S) centers, to quinones in the photosynthetic chain and possibly in a chloroplast respiratory chain. The immediate electron acceptor for the enzyme in this species is believed to be plastoquinone. Couples the redox reaction to proton translocation, and thus conserves the redox energy in a proton gradient. The chain is NAD(P)H-quinone oxidoreductase subunit K, chloroplastic from Drimys granadensis.